The primary structure comprises 69 residues: RICYLAPRDTQICAPGQEICYLKSWDDGTGFLKGNRLEFGCAATCPTVKPGIDIKCCSTDKCNPHPKLA.

Cystine bridges form between Cys3–Cys20, Cys13–Cys41, Cys45–Cys56, and Cys57–Cys62.

Belongs to the three-finger toxin family. Long-chain subfamily. Type II alpha-neurotoxin sub-subfamily. Expressed by the venom gland.

Its subcellular location is the secreted. Its function is as follows. Binds with high affinity to muscular nicotinic acetylcholine receptors (nAChRs), whereas it binds with a low affinity to neuronal alpha-7/CHRNA7 nAChRs. In Laticauda colubrina (Yellow-lipped sea krait), this protein is Toxin Lc a.